A 383-amino-acid chain; its full sequence is Queuine tRNA-ribosyltransferase (383 aa).

Catalysis depends on Asp90, which acts as the Proton acceptor. Substrate-binding positions include 90–94 (DSGGF), Asp144, Gln193, and Gly227. The segment at 258-264 (GVGTPED) is RNA binding. Asp277 functions as the Nucleophile in the catalytic mechanism. The segment at 282–286 (TRNAR) is RNA binding; important for wobble base 34 recognition. Cys315, Cys317, Cys320, and His346 together coordinate Zn(2+).

It belongs to the queuine tRNA-ribosyltransferase family. In terms of assembly, homodimer. Within each dimer, one monomer is responsible for RNA recognition and catalysis, while the other monomer binds to the replacement base PreQ1. Requires Zn(2+) as cofactor.

The enzyme catalyses 7-aminomethyl-7-carbaguanine + guanosine(34) in tRNA = 7-aminomethyl-7-carbaguanosine(34) in tRNA + guanine. It participates in tRNA modification; tRNA-queuosine biosynthesis. Functionally, catalyzes the base-exchange of a guanine (G) residue with the queuine precursor 7-aminomethyl-7-deazaguanine (PreQ1) at position 34 (anticodon wobble position) in tRNAs with GU(N) anticodons (tRNA-Asp, -Asn, -His and -Tyr). Catalysis occurs through a double-displacement mechanism. The nucleophile active site attacks the C1' of nucleotide 34 to detach the guanine base from the RNA, forming a covalent enzyme-RNA intermediate. The proton acceptor active site deprotonates the incoming PreQ1, allowing a nucleophilic attack on the C1' of the ribose to form the product. After dissociation, two additional enzymatic reactions on the tRNA convert PreQ1 to queuine (Q), resulting in the hypermodified nucleoside queuosine (7-(((4,5-cis-dihydroxy-2-cyclopenten-1-yl)amino)methyl)-7-deazaguanosine). This is Queuine tRNA-ribosyltransferase from Ralstonia pickettii (strain 12J).